Consider the following 97-residue polypeptide: Carboxypeptidase inhibitor (97 aa).

The first 22 residues, 1 to 22 (MAATLPVFAVVFFAMVLASSQA), serve as a signal peptide directing secretion.

The protein localises to the secreted. In terms of biological role, potent competitive inhibitor of metallo-carboxypeptidases CPA1, CPA2, CPB, CPN, and TAF1a. Also inhibits human CPA4. Accelerates fibrinolysis in vitro and may contribute to the maintenance of host blood liquidity during feeding. The protein is Carboxypeptidase inhibitor of Rhipicephalus bursa (Tick).